The primary structure comprises 427 residues: Serine--tRNA ligase (427 aa).

233–235 (TAE) is an L-serine binding site. 264–266 (RSE) is a binding site for ATP. Glu-287 is a binding site for L-serine. 351 to 354 (EISS) provides a ligand contact to ATP. Ser-386 lines the L-serine pocket.

Belongs to the class-II aminoacyl-tRNA synthetase family. Type-1 seryl-tRNA synthetase subfamily. As to quaternary structure, homodimer. The tRNA molecule binds across the dimer.

The protein resides in the cytoplasm. The enzyme catalyses tRNA(Ser) + L-serine + ATP = L-seryl-tRNA(Ser) + AMP + diphosphate + H(+). It carries out the reaction tRNA(Sec) + L-serine + ATP = L-seryl-tRNA(Sec) + AMP + diphosphate + H(+). It functions in the pathway aminoacyl-tRNA biosynthesis; selenocysteinyl-tRNA(Sec) biosynthesis; L-seryl-tRNA(Sec) from L-serine and tRNA(Sec): step 1/1. Catalyzes the attachment of serine to tRNA(Ser). Is also able to aminoacylate tRNA(Sec) with serine, to form the misacylated tRNA L-seryl-tRNA(Sec), which will be further converted into selenocysteinyl-tRNA(Sec). The sequence is that of Serine--tRNA ligase from Thiobacillus denitrificans (strain ATCC 25259 / T1).